The following is a 1891-amino-acid chain: MTSRLLETGSTPFIRNTAAQQLADVQKQHPDELFNLLGRILPYLRSKSWDTRAAAAKAIGLIVANADTFDPNQDDGQEIKKAENDDLDVDIKSEEELLSPMDDSLLQLERLDLPSILKYGKRLLGSAGKEYEYSLAAMDPASRLQHQKKTLTSRLGLAGEYIEEDLINDNDLVSKPVVKEEPSFVASREHSIQGTSQPLASPIEPANGEESGLSKRQLNQLKRKNKQSARMGANKVRVVDLSSRRASENVTTPSVATPYPIKSENGEERNGDSKPDYFSLDRSAGDDESKIVSEFKGASVPENPLLQPESTEEGPNPNWPFELMCDILMVDLFDPNWEIRHGAAMALREVIRIQGAGAGRVQGKSRAENDILNRKWLDDLACRLLCVLMLDRFGDYISDNVVAPIRETVGQTLGALLSQLPSRSVISVYKCLYRIIMQTDLGLERPIWEVCHGGMIGLRYLVAVRKDLLIKDSKLMDGVLEAVMKGLGDYDDDVRAVSAATLVPIAEEFVKTRQSTLGTLMTIVWDCLSNLQDDLSASTGSVMDLLAKLCTFQEVLDAMKANAAVNPESSFGKLVPRLYPFLRHTITSVRSAVLRALMTFLQLEGEGTDEWVDGKTVRLIFQNLLVERNEGVLKQSLQVWSELLNSLETRGSFKSESDLLSHIKPLITLSMGPFGVPRYPVPMDASLFIKPSGLPFPSSAAAPARSSPASNTPEGTKGRRRKSEKKEAPPPSAHNVDGHMLQGDIDLVGADTMLRSKIYAARALGQLLFVWDQNQLPSLWQSILEGLNHSASTSQLASAMIVEEYAKLSGPSGRYASTLCENLRPIIEGERPPWYSDIACYLHVARAQCHSLLNTFRDHAHVPGSRLPVLAVIVQGDPEAGPNAFSLSDAEKVIGPDFERLKKGLTPAQRITALQVLNDTRATAESAVNEARNVREQRDLRVRAAAAGALVALSDIPKKPSHIIKGMMDSIKKEENAELQQRSATAITSLVEYYTTSAKRGPVDKVIGNLVKYCCVDTSETPEFHHNAMLEKSILSLRKEEDRRDHPDAAKFEREAKEARIMRRGAKEALEQLAVKFGSELMAKVPNLASLIERPLKEALAADELPANIRDPENELGQEVVDGLSTLRAILPKFHSGLYPWVVDLLPLVVKALQCKLSVIRYAAAKCFATICSVITVEGMTMLVEKVLPMINDALDVHHRQGAVECIYHLIHVMEDGILPYVIFLVVPVLGRMSDSDNEVRLLATTSFATLVKLVPLEAGIPDPPGLSEELLKGRDRERQFMAQMLDVRKVEEFKIPVAIKAELRPYQQEGVNWLAFLNRYNLHGILCDDMGLGKTLQTICIVASDHHMRAEEFARTQKPEVRKLPSLIVCPPSLSGHWQQELKQYAPFLNCVAYVGPPAERSRLQSALPNADIVVTSYDICRNDNEVLNPINWNYCVLDEGHLIKNPKAKATIAVKRLLSNHRLILSGTPIQNNVLELWSLFDFLMPGFLGTEKVFLDRFAKPIAASRFSKSSSKEQEAGALAIEALHKQVLPFLLRRLKEEVLNDLPPKIIQNYYCDPSELQRKLFEDFTKKEQKALQDKVGSTEKADKEHIFQALQYMRRLCNSPALVVKEGHKQYNEVQQYLAAKHSNIRDVAHAPKLSALRDLLIDCGIGVDSPSEGDLSGASYVSPHRALIFCQMKEMLDIVQSEVFNKLLPSVQFLRLDGSVEATRRQDIVNRFNTDPSYDVLLLTTSVGGLGLNLTGADTVIFVEHDWNPQKDIQAMDRAHRIGQKKVVNVYRLITRGTLEEKILNLQRFKIDVASTVVNQQNAGLGTMDTDQLLDLFNLGETAETAEKPSDAAGNEVDMVDIDGNVKEKGKKGWLDDLGELWDDRQYQEEYNLDSFLATMKG.

The stretch at 30 to 68 is one HEAT 1 repeat; that stretch reads PDELFNLLGRILPYLRSKSWDTRAAAAKAIGLIVANADT. Disordered stretches follow at residues 184-216, 241-283, and 295-316; these read FVAS…LSKR, LSSR…LDRS, and FKGA…EGPN. Residues 264–275 show a composition bias toward basic and acidic residues; it reads ENGEERNGDSKP. HEAT repeat units follow at residues 473 to 511 and 569 to 606; these read SKLM…EFVK and SSFG…LEGE. Residues 699 to 710 show a composition bias toward low complexity; that stretch reads SAAAPARSSPAS. The interval 699–740 is disordered; it reads SAAAPARSSPASNTPEGTKGRRRKSEKKEAPPPSAHNVDGHM. 4 HEAT repeats span residues 957-996, 1139-1177, 1181-1216, and 1219-1257; these read PKKP…YYTT, YPWV…VITV, TMLV…VMED, and LPYV…LVPL. One can recognise a Helicase ATP-binding domain in the interval 1316-1489; that stretch reads AFLNRYNLHG…WSLFDFLMPG (174 aa). 1329–1336 is an ATP binding site; the sequence is DDMGLGKT. The DEAH box motif lies at 1440-1443; sequence DEGH. The stretch at 1526-1565 is one HEAT 8 repeat; the sequence is EALHKQVLPFLLRRLKEEVLNDLPPKIIQNYYCDPSELQR. Residues 1663–1813 form the Helicase C-terminal domain; that stretch reads DLSGASYVSP…STVVNQQNAG (151 aa).

The protein belongs to the SNF2/RAD54 helicase family. In terms of assembly, forms the NCT transcriptional regulatory complex with nctA and nctB.

It is found in the nucleus. Its function is as follows. Regulates transcription in association with TATA binding protein (TBP). Removes TBP from the TATA box via its C-terminal ATPase activity. Both transcription activation and repression require its ATPase activity. Part of the NCT transcriptional regulatory complex that acts as a key regulator of ergosterol biosynthesis and the azole exporter cdr1B. The NCT complex binds the promoters of genes linked to azole susceptibility, and especially represses the expression of cdr1B transporter. This Aspergillus fumigatus (strain CBS 144.89 / FGSC A1163 / CEA10) (Neosartorya fumigata) protein is TATA-binding protein-associated factor mot1.